Consider the following 57-residue polypeptide: Small ribosomal subunit protein bS21 (57 aa).

Belongs to the bacterial ribosomal protein bS21 family.

The polypeptide is Small ribosomal subunit protein bS21 (Bacillus cytotoxicus (strain DSM 22905 / CIP 110041 / 391-98 / NVH 391-98)).